Reading from the N-terminus, the 105-residue chain is Large ribosomal subunit protein uL24 (105 aa).

This sequence belongs to the universal ribosomal protein uL24 family. Part of the 50S ribosomal subunit.

Functionally, one of two assembly initiator proteins, it binds directly to the 5'-end of the 23S rRNA, where it nucleates assembly of the 50S subunit. In terms of biological role, one of the proteins that surrounds the polypeptide exit tunnel on the outside of the subunit. The sequence is that of Large ribosomal subunit protein uL24 from Psychrobacter cryohalolentis (strain ATCC BAA-1226 / DSM 17306 / VKM B-2378 / K5).